A 155-amino-acid polypeptide reads, in one-letter code: NADPH-dependent 7-cyano-7-deazaguanine reductase (155 aa).

Cys-53 serves as the catalytic Thioimide intermediate. Residue Asp-60 is the Proton donor of the active site. Residues 75 to 77 (VES) and 94 to 95 (HE) each bind substrate.

It belongs to the GTP cyclohydrolase I family. QueF type 1 subfamily.

The protein localises to the cytoplasm. It catalyses the reaction 7-aminomethyl-7-carbaguanine + 2 NADP(+) = 7-cyano-7-deazaguanine + 2 NADPH + 3 H(+). The protein operates within tRNA modification; tRNA-queuosine biosynthesis. Catalyzes the NADPH-dependent reduction of 7-cyano-7-deazaguanine (preQ0) to 7-aminomethyl-7-deazaguanine (preQ1). The protein is NADPH-dependent 7-cyano-7-deazaguanine reductase of Brucella suis (strain ATCC 23445 / NCTC 10510).